Consider the following 1228-residue polypeptide: Reverse gyrase (1228 aa).

The segment at 1-41 (MEVPLVAYLHSCPNCGGPITSDRLASGLPCRECLPDGAKAG) adopts an RG N-terminal-type zinc-finger fold. 4 residues coordinate Zn(2+): Cys12, Cys15, Cys30, and Cys33. ATP is bound by residues Gln88 and 105–112 (APTGSGKT). Positions 92-255 (ARRFVRGKSF…NLTKQLRKAE (164 aa)) constitute a Helicase ATP-binding domain. The DEAD box signature appears at 211 to 214 (DDVD). Residues 631–1228 (DLMRTILMVV…RKEVLPHLAS (598 aa)) form a topoisomerase I region. One can recognise a Toprim domain in the interval 635-809 (TILMVVESPT…DIRRVEFHEV (175 aa)). Residues Glu641 and Asp778 each contribute to the Mg(2+) site. The Topo IA-type catalytic domain occupies 825 to 1223 (NFSLVKAQIV…LYDEFRKEVL (399 aa)). Tyr967 acts as the O-(5'-phospho-DNA)-tyrosine intermediate in catalysis.

In the N-terminal section; belongs to the DEAD box helicase family. DDVD subfamily. This sequence in the C-terminal section; belongs to the type IA topoisomerase family. As to quaternary structure, monomer. It depends on Zn(2+) as a cofactor. Requires Mg(2+) as cofactor.

The protein localises to the cytoplasm. It catalyses the reaction ATP + H2O = ADP + phosphate + H(+). Modifies the topological state of DNA by introducing positive supercoils in an ATP-dependent process, increasing the linking number in steps of +1. Binds to single-stranded DNA, transiently cleaves and then rejoins the ends, introducing a positive supercoil in the process. The scissile phosphodiester is attacked by the catalytic tyrosine of the enzyme, resulting in the formation of a DNA-(5'-phosphotyrosyl)-enzyme intermediate. Probably involved in rewinding DNA strands in regions of the chromosome that have opened up to allow replication, transcription, DNA repair and/or for DNA protection. This is Reverse gyrase from Pyrobaculum aerophilum (strain ATCC 51768 / DSM 7523 / JCM 9630 / CIP 104966 / NBRC 100827 / IM2).